The following is a 226-amino-acid chain: Transmembrane protein 204 (226 aa).

At 1–5 the chain is on the cytoplasmic side; sequence MTVRK. The chain crosses the membrane as a helical span at residues 6 to 26; the sequence is VVATAVLVALVSLVLNNAAAF. Residues 27–103 lie on the Extracellular side of the membrane; it reads TPNWVYQTLE…LQFDMMRACN (77 aa). A helical membrane pass occupies residues 104–124; it reads LVATAALAAGQLTFVLGLTGL. The Cytoplasmic portion of the chain corresponds to 125-136; it reads PLLSPDAQCWEE. Residues 137–157 form a helical membrane-spanning segment; the sequence is AMAAAFQLASFVLVIGLVTFY. Residues 158-170 lie on the Extracellular side of the membrane; it reads RIGPYTSLSWSCY. Residues 171–191 traverse the membrane as a helical segment; sequence LNIGACLLATLAAAMLIWNVL. Residues 192–226 lie on the Cytoplasmic side of the membrane; that stretch reads HRREDCTAPRVIVISRSLTARFRRGLDNDYVESPC.

It is found in the cell junction. Its subcellular location is the adherens junction. It localises to the cell membrane. Can influence paracellular permeability. Appears to be involved in cell-cell interactions through adherens. This chain is Transmembrane protein 204 (TMEM204), found in Bos taurus (Bovine).